Consider the following 610-residue polypeptide: MPEYRSKTSTYGRNMAGARALWRATGMKDDDFQKPIIAIANSFTQFVPGHVHLKDLGQLVAREIERLGGVAKEFNTIAVDDGIAMGHDGMLYSLPSREIIADSVEYMANAHCADALVCISNCDKITPGMLMASLRLNIPTVFVSGGPMEAGKTTLADHKLDLVDAMVLAADPHASDEEVATVERSACPTCGSCSGMFTANSMNCLTEALGLSLPGNGTVVATHSDRKQLFLNAGRTVIELCHRWYGAEDATALPRGIATFAAFENAITLDIAMGGSTNTILHLLAAAQEAQVSFTMQDIDRLSRNVPQLCKVAPNTQKYHIEDVHRAGGIFGILAELARGNLLHTDVATVHSKTLGEAIATWDIIGTQDEAVHTFYKAGSAGIPTQVAFSQSTRWPSLDTDRTEGCIRDMEHAFSKEGGLAVLYGNIAQDGCVVKTAGVDASIHVFEGSALVYESQEAAVKGILSDEVQPGMIVVIRYEGPKGGPGMQEMLYPTSYLKSKGLGKQCALFTDGRFSGGTSGLSIGHASPEAAAGGAIGLIRDGDRIRIDIPQRAINVLISEEELASRRLEQHAIGWKPAQSRTRKVSSALKAYSLLATSADKGAVRNKTLL.

Asp81 is a Mg(2+) binding site. Cys122 is a binding site for [2Fe-2S] cluster. Residues Asp123 and Lys124 each coordinate Mg(2+). The residue at position 124 (Lys124) is an N6-carboxylysine. Cys193 is a [2Fe-2S] cluster binding site. Glu489 is a binding site for Mg(2+). Ser515 functions as the Proton acceptor in the catalytic mechanism.

This sequence belongs to the IlvD/Edd family. As to quaternary structure, homodimer. [2Fe-2S] cluster is required as a cofactor. It depends on Mg(2+) as a cofactor.

It carries out the reaction (2R)-2,3-dihydroxy-3-methylbutanoate = 3-methyl-2-oxobutanoate + H2O. The catalysed reaction is (2R,3R)-2,3-dihydroxy-3-methylpentanoate = (S)-3-methyl-2-oxopentanoate + H2O. Its pathway is amino-acid biosynthesis; L-isoleucine biosynthesis; L-isoleucine from 2-oxobutanoate: step 3/4. It participates in amino-acid biosynthesis; L-valine biosynthesis; L-valine from pyruvate: step 3/4. Functions in the biosynthesis of branched-chain amino acids. Catalyzes the dehydration of (2R,3R)-2,3-dihydroxy-3-methylpentanoate (2,3-dihydroxy-3-methylvalerate) into 2-oxo-3-methylpentanoate (2-oxo-3-methylvalerate) and of (2R)-2,3-dihydroxy-3-methylbutanoate (2,3-dihydroxyisovalerate) into 2-oxo-3-methylbutanoate (2-oxoisovalerate), the penultimate precursor to L-isoleucine and L-valine, respectively. This is Dihydroxy-acid dehydratase from Xylella fastidiosa (strain M12).